Reading from the N-terminus, the 596-residue chain is Capsid protein VP1 (596 aa).

This sequence belongs to the microviridae F protein family.

The protein localises to the virion. The protein resides in the host cytoplasm. Functionally, assembles to form an icosahedral capsid with a T=1 symmetry. This Chlamydia phage 1 (Bacteriophage Chp1) protein is Capsid protein VP1.